The chain runs to 697 residues: Potassium-transporting ATPase ATP-binding subunit (697 aa).

4 helical membrane-spanning segments follow: residues 55 to 75, 79 to 99, 245 to 265, and 271 to 291; these read PIMFVVEIGFVITFILSFLPS, SIPGWFNITVSLILLFTVLFA, LTLIFLIVVVTLPIFTNYLGF, and VLVALLVCLIPTTIGGLLSAI. The 4-aspartylphosphate intermediate role is filled by Asp324. Residues Asp361, Glu365, 393-400, and Lys412 each bind ATP; that span reads FKAETRMS. 2 residues coordinate Mg(2+): Asp535 and Asp539. 3 helical membrane passes run 605 to 625, 633 to 653, and 677 to 697; these read FAIIPAMFTLAIPQMEALNIM, AILSALLFNAVIIPLLIPLAM, and GGVIVPFIGIKVIDIIVGLFI.

The protein belongs to the cation transport ATPase (P-type) (TC 3.A.3) family. Type IA subfamily. In terms of assembly, the system is composed of three essential subunits: KdpA, KdpB and KdpC.

The protein localises to the cell membrane. It catalyses the reaction K(+)(out) + ATP + H2O = K(+)(in) + ADP + phosphate + H(+). Functionally, part of the high-affinity ATP-driven potassium transport (or Kdp) system, which catalyzes the hydrolysis of ATP coupled with the electrogenic transport of potassium into the cytoplasm. This subunit is responsible for energy coupling to the transport system and for the release of the potassium ions to the cytoplasm. This chain is Potassium-transporting ATPase ATP-binding subunit, found in Bacillus anthracis (strain CDC 684 / NRRL 3495).